The sequence spans 132 residues: Transcriptional regulator MraZ (132 aa).

SpoVT-AbrB domains follow at residues 5–47 (TYEH…SKDD) and 76–119 (TVEI…SKNK).

This sequence belongs to the MraZ family. Forms oligomers.

The protein resides in the cytoplasm. It is found in the nucleoid. This is Transcriptional regulator MraZ from Mycoplasma capricolum subsp. capricolum (strain California kid / ATCC 27343 / NCTC 10154).